A 261-amino-acid polypeptide reads, in one-letter code: Protein LIKE COV 2 (261 aa).

Positions M1–R38 are disordered. At M1–G56 the chain is on the cytoplasmic side. Positions A7–T17 are enriched in polar residues. Residues F57–V77 form a helical membrane-spanning segment. At D78–D91 the chain is on the extracellular side. The helical transmembrane segment at I92–S112 threads the bilayer. Residues S113–L261 lie on the Cytoplasmic side of the membrane.

It belongs to the plant COV1 protein family.

The protein resides in the membrane. The polypeptide is Protein LIKE COV 2 (Arabidopsis thaliana (Mouse-ear cress)).